The chain runs to 541 residues: Metal transporter Nramp1 (541 aa).

Asn-17 carries an N-linked (GlcNAc...) asparagine glycan. A run of 10 helical transmembrane segments spans residues 45 to 65 (LFAY…PGNF), 78 to 98 (ELLW…SLAA), 122 to 142 (FILW…EVIG), 153 to 173 (IPVW…LALQ), 182 to 202 (LFIA…LGYA), 222 to 242 (GAAG…NLFL), 271 to 291 (GFAL…SGAV), 315 to 335 (FLLE…ALLA), 371 to 391 (SLAI…GAGK), and 392 to 412 (LIII…VPLL). N-linked (GlcNAc...) asparagine glycosylation occurs at Asn-426. Helical transmembrane passes span 430 to 450 (ISSI…YYLA) and 465 to 485 (VAAI…LAGV). A glycan (N-linked (GlcNAc...) asparagine) is linked at Asn-511.

It belongs to the NRAMP (TC 2.A.55) family.

The protein resides in the membrane. Functionally, probable divalent metal transporter. The sequence is that of Metal transporter Nramp1 from Populus trichocarpa (Western balsam poplar).